Reading from the N-terminus, the 104-residue chain is L-rhamnose mutarotase (104 aa).

Residue Tyr18 participates in substrate binding. The active-site Proton donor is His22. Substrate-binding positions include Tyr41 and 76–77 (WW).

The protein belongs to the rhamnose mutarotase family. Homodimer.

The protein localises to the cytoplasm. It catalyses the reaction alpha-L-rhamnose = beta-L-rhamnose. It participates in carbohydrate metabolism; L-rhamnose metabolism. Functionally, involved in the anomeric conversion of L-rhamnose. This Escherichia coli O17:K52:H18 (strain UMN026 / ExPEC) protein is L-rhamnose mutarotase.